The primary structure comprises 344 residues: Hypoxia-inducible factor 1-alpha inhibitor (344 aa).

An N-acetylalanine modification is found at Ala-2. Residues Gly-133–Ala-303 enclose the JmjC domain. Tyr-136 serves as a coordination point for 2-oxoglutarate. Substrate-binding positions include Asp-143 and Leu-173–Thr-174. Position 187 (Thr-187) interacts with 2-oxoglutarate. Residues His-190 and Asp-192 each coordinate Fe cation. Asp-192–Gln-194 lines the substrate pocket. Residues Asn-196 and Lys-205 each coordinate 2-oxoglutarate. Arg-229–Gln-230 contributes to the substrate binding site. A Fe cation-binding site is contributed by His-270. Asn-285 is a 2-oxoglutarate binding site. Substrate contacts are provided by Ala-291 and Asn-312.

In terms of assembly, homodimer; homodimerization is essential for catalytic activity. Requires Fe(2+) as cofactor.

The protein localises to the nucleus. Its subcellular location is the cytoplasm. The protein resides in the perinuclear region. The catalysed reaction is L-asparaginyl-[hypoxia-inducible factor alpha subunit] + 2-oxoglutarate + O2 = (3S)-3-hydroxy-L-asparaginyl-[hypoxia-inducible factor alpha subunit] + succinate + CO2. The enzyme catalyses L-histidyl-[ankyrin-repeat domain protein] + 2-oxoglutarate + O2 = (3S)-3-hydroxy-L-histidyl-[ankyrin-repeat domain protein] + succinate + CO2. It catalyses the reaction L-asparaginyl-[ankyrin-repeat domain protein] + 2-oxoglutarate + O2 = (3S)-3-hydroxy-L-asparaginyl-[ankyrin-repeat domain protein] + succinate + CO2. It carries out the reaction L-aspartyl-[ankyrin-repeat domain protein] + 2-oxoglutarate + O2 = (3S)-3-hydroxy-L-aspartyl-[ankyrin-repeat domain protein] + succinate + CO2. Functionally, hydroxylates a specific Asn residue in the C-terminal transactivation domain (CAD) of HIF-1 alpha. The hydroxylation prevents interaction of HIF-1 with transcriptional coactivators. Also hydroxylates specific Asn, Asp and His residues within ankyrin repeat domain-containing proteins. The polypeptide is Hypoxia-inducible factor 1-alpha inhibitor (hif1an) (Danio rerio (Zebrafish)).